The sequence spans 829 residues: Periplasmic nitrate reductase (829 aa).

Positions 1–27 (MNRRDFMKANAVIAAASAAGLALPAGA) form a signal peptide, tat-type signal. The region spanning 39 to 95 (LEWNKAPCRFCGTGCSVMVATREGKVVATHGDANSEVNRGLSCIKGYFLSKIMYGRD) is the 4Fe-4S Mo/W bis-MGD-type domain. 4 residues coordinate [4Fe-4S] cluster: cysteine 46, cysteine 49, cysteine 53, and cysteine 81. Residues lysine 83, glutamine 150, asparagine 175, cysteine 179, 212–219 (WGSNMAEM), 243–247 (STFEH), 262–264 (QTD), methionine 373, glutamine 377, asparagine 483, 509–510 (SD), lysine 532, aspartate 559, and 719–728 (TGRVLEHWHS) each bind Mo-bis(molybdopterin guanine dinucleotide). A substrate-binding site is contributed by tryptophan 795. Mo-bis(molybdopterin guanine dinucleotide) contacts are provided by asparagine 803 and lysine 820.

It belongs to the prokaryotic molybdopterin-containing oxidoreductase family. NasA/NapA/NarB subfamily. As to quaternary structure, component of the periplasmic nitrate reductase NapAB complex composed of NapA and NapB. The cofactor is [4Fe-4S] cluster. Requires Mo-bis(molybdopterin guanine dinucleotide) as cofactor. In terms of processing, predicted to be exported by the Tat system. The position of the signal peptide cleavage has not been experimentally proven.

The protein localises to the periplasm. The catalysed reaction is 2 Fe(II)-[cytochrome] + nitrate + 2 H(+) = 2 Fe(III)-[cytochrome] + nitrite + H2O. Catalytic subunit of the periplasmic nitrate reductase complex NapAB. Receives electrons from NapB and catalyzes the reduction of nitrate to nitrite. This chain is Periplasmic nitrate reductase, found in Shewanella denitrificans (strain OS217 / ATCC BAA-1090 / DSM 15013).